The following is a 782-amino-acid chain: Fibrinogen alpha chain (782 aa).

A signal peptide spans 1 to 19 (MLSLRVACLILSLASTVWT). The stretch at 68–547 (GCRMKGLIDE…KRGRARTMRD (480 aa)) forms a coiled coil. Residues 264–283 (RPGKDGASRGDLPGDSRGDS) are compositionally biased toward basic and acidic residues. The segment at 264–374 (RPGKDGASRG…PATRKEYHTG (111 aa)) is disordered. Residue S279 is modified to Phosphoserine. A compositionally biased stretch (gly residues) spans 311-323 (SGSGSDGNWGSGT). 2 stretches are compositionally biased toward low complexity: residues 324–344 (TGSD…SGSG) and 354–364 (GEFSEFGGSSS). Residue S326 is modified to Phosphoserine. Residues C404 and C434 are joined by a disulfide bond. A Phosphoserine modification is found at S470. Position 499 is a 4-hydroxyproline; by P4HA1 (P499). A compositionally biased stretch (basic and acidic residues) spans 522-536 (DEAASEAHQEGDTRT). The tract at residues 522–542 (DEAASEAHQEGDTRTTKRGRA) is disordered. S526 is modified (phosphoserine). The 242-residue stretch at 539–780 (RGRARTMRDC…AVRMKIRPLV (242 aa)) folds into the Fibrinogen C-terminal domain. The N-linked (GlcNAc...) asparagine glycan is linked to N602. Residues D707, D709, W711, and E713 each coordinate Ca(2+). Residues C715 and C728 are joined by a disulfide bond.

As to quaternary structure, heterohexamer; disulfide linked. Contains 2 sets of 3 non-identical chains (alpha, beta and gamma). The 2 heterotrimers are in head to head conformation with the N-termini in a small central domain. Post-translationally, conversion of fibrinogen to fibrin is triggered by thrombin, which cleaves fibrinopeptides A and B from alpha and beta chains, and thus exposes the N-terminal polymerization sites responsible for the formation of the soft clot. The soft clot is converted into the hard clot by factor XIIIA which catalyzes the epsilon-(gamma-glutamyl)lysine cross-linking between gamma chains (stronger) and between alpha chains (weaker) of different monomers. Forms F13A-mediated cross-links between a glutamine and the epsilon-amino group of a lysine residue, forming fibronectin-fibrinogen heteropolymers. In terms of processing, phosphorylated by FAM20C in the extracellular medium.

The protein localises to the secreted. In terms of biological role, cleaved by the protease thrombin to yield monomers which, together with fibrinogen beta (FGB) and fibrinogen gamma (FGG), polymerize to form an insoluble fibrin matrix. Fibrin has a major function in hemostasis as one of the primary components of blood clots. In addition, functions during the early stages of wound repair to stabilize the lesion and guide cell migration during re-epithelialization. Was originally thought to be essential for platelet aggregation, based on in vitro studies using anticoagulated blood. However, subsequent studies have shown that it is not absolutely required for thrombus formation in vivo. Enhances expression of SELP in activated platelets via an ITGB3-dependent pathway. Maternal fibrinogen is essential for successful pregnancy. Fibrin deposition is also associated with infection, where it protects against IFNG-mediated hemorrhage. May also facilitate the immune response via both innate and T-cell mediated pathways. The sequence is that of Fibrinogen alpha chain (Fga) from Rattus norvegicus (Rat).